The chain runs to 657 residues: Protein mono-ADP-ribosyltransferase TIPARP (657 aa).

Residues 1-10 (MEVETTEPEP) are compositionally biased toward acidic residues. Positions 1–22 (MEVETTEPEPDCVVQPPSPSDD) are disordered. At C39 the chain carries ADP-ribosylcysteine. The short motif at 41–48 (KKKQEQKR) is the Nuclear localization signal element. The tract at residues 121-154 (QLPEAHPSTDAPEQGVPIQDHSFPPETISGTVAD) is disordered. A C3H1-type zinc finger spans residues 238-265 (ENGIEICMDFLQGTCIYGRDCLKHHTVL). Positions 333–411 (STPPCSNSNS…RRPLFRSCFI (79 aa)) constitute a WWE domain. The 209-residue stretch at 449-657 (YPETWVYMHP…YEEVSNTVSI (209 aa)) folds into the PARP catalytic domain.

This sequence belongs to the ARTD/PARP family. As to quaternary structure, interacts with AHR. Auto-mono-ADP-ribosylated. Ubiquitously expressed.

The protein resides in the nucleus. The enzyme catalyses L-aspartyl-[protein] + NAD(+) = 4-O-(ADP-D-ribosyl)-L-aspartyl-[protein] + nicotinamide. It carries out the reaction L-glutamyl-[protein] + NAD(+) = 5-O-(ADP-D-ribosyl)-L-glutamyl-[protein] + nicotinamide. It catalyses the reaction L-cysteinyl-[protein] + NAD(+) = S-(ADP-D-ribosyl)-L-cysteinyl-[protein] + nicotinamide + H(+). ADP-ribosyltransferase that mediates mono-ADP-ribosylation of glutamate, aspartate and cysteine residues on target proteins. Acts as a negative regulator of AHR by mediating mono-ADP-ribosylation of AHR, leading to inhibit transcription activator activity of AHR. The polypeptide is Protein mono-ADP-ribosyltransferase TIPARP (Mus musculus (Mouse)).